A 306-amino-acid chain; its full sequence is Ribonuclease Z (306 aa).

Residues His63, His65, Asp67, His68, His141, Asp211, and His269 each coordinate Zn(2+). The active-site Proton acceptor is Asp67.

The protein belongs to the RNase Z family. As to quaternary structure, homodimer. Zn(2+) serves as cofactor.

The enzyme catalyses Endonucleolytic cleavage of RNA, removing extra 3' nucleotides from tRNA precursor, generating 3' termini of tRNAs. A 3'-hydroxy group is left at the tRNA terminus and a 5'-phosphoryl group is left at the trailer molecule.. In terms of biological role, zinc phosphodiesterase, which displays some tRNA 3'-processing endonuclease activity. Probably involved in tRNA maturation, by removing a 3'-trailer from precursor tRNA. The chain is Ribonuclease Z from Staphylococcus saprophyticus subsp. saprophyticus (strain ATCC 15305 / DSM 20229 / NCIMB 8711 / NCTC 7292 / S-41).